We begin with the raw amino-acid sequence, 274 residues long: Exosome complex component Rrp42 (274 aa).

This sequence belongs to the RNase PH family. Rrp42 subfamily. As to quaternary structure, component of the archaeal exosome complex. Forms a hexameric ring-like arrangement composed of 3 Rrp41-Rrp42 heterodimers. The hexameric ring associates with a trimer of Rrp4 and/or Csl4 subunits.

The protein resides in the cytoplasm. Non-catalytic component of the exosome, which is a complex involved in RNA degradation. Contributes to the structuring of the Rrp41 active site. This chain is Exosome complex component Rrp42, found in Pyrobaculum aerophilum (strain ATCC 51768 / DSM 7523 / JCM 9630 / CIP 104966 / NBRC 100827 / IM2).